Consider the following 1744-residue polypeptide: Myotubularin-related protein 5 (1744 aa).

The uDENN domain maps to 14 to 150 (DTVAVIVLEE…IRFLTYELVE (137 aa)). The cDENN domain maps to 165 to 304 (ELGFELIPIS…YYNSLHQRLR (140 aa)). The 107-residue stretch at 306-412 (VMFTTTSQED…LTRALPRRKH (107 aa)) folds into the dDENN domain. A GRAM domain is found at 787–871 (KGNFDPVLAH…LYSMESFKKL (85 aa)). Residues 996 to 1447 (NAHIRYAVID…PQIHMWPFLA (452 aa)) enclose the Myotubularin phosphatase domain. Residues 1102–1116 (TGSMTGSQQTLHSKA) are compositionally biased toward polar residues. Residues 1102 to 1123 (TGSMTGSQQTLHSKASSNEESS) form a disordered region. The segment at 1540–1590 (IHELTPFTVGARPVQCCYCTNILTRWSKAVHCKKCRIHVHEGCVNRNITIG) adopts a Phorbol-ester/DAG-type zinc-finger fold. The PH domain maps to 1643 to 1743 (PPLCTGYLSK…WKECIEQVIR (101 aa)).

The protein belongs to the protein-tyrosine phosphatase family. Non-receptor class myotubularin subfamily.

Probably acts as an adapter for other myotubularin-like phosphatases. The chain is Myotubularin-related protein 5 from Caenorhabditis elegans.